Here is a 233-residue protein sequence, read N- to C-terminus: Antiholin-like protein LrgB (233 aa).

Transmembrane regions (helical) follow at residues Ile-7–Leu-27, Gly-33–Leu-53, Ile-63–Leu-83, Ile-97–Glu-117, Gly-124–Ala-144, Leu-152–Ile-172, and Ile-212–Leu-232.

This sequence belongs to the CidB/LrgB family. LrgB subfamily.

Its subcellular location is the cell membrane. In terms of biological role, inhibits the expression or activity of extracellular murein hydrolases by interacting, possibly with LrgA, with the holin-like proteins CidA and/or CidB. The LrgAB and CidAB proteins may affect the proton motive force of the membrane. May be involved in programmed cell death (PCD), possibly triggering PCD in response to antibiotics and environmental stresses. This is Antiholin-like protein LrgB from Staphylococcus saprophyticus subsp. saprophyticus (strain ATCC 15305 / DSM 20229 / NCIMB 8711 / NCTC 7292 / S-41).